The following is a 406-amino-acid chain: Vacuole membrane protein 1 (406 aa).

Basic and acidic residues predominate over residues 1-21 (MAENGKNCDQRRVAMNKEHHN). Residues 1-35 (MAENGKNCDQRRVAMNKEHHNGNFTDPSSVNEKKR) are disordered. The residue at position 2 (A2) is an N-acetylalanine. Residues 2–43 (AENGKNCDQRRVAMNKEHHNGNFTDPSSVNEKKRREREERQN) are Cytoplasmic-facing. A helical membrane pass occupies residues 44 to 64 (IVLWRQPLITLQYFSLEILVI). Residues 65–77 (LKEWTSKLWHRQS) lie on the Extracellular side of the membrane. The helical transmembrane segment at 78–98 (IVVSFLLLLAVLIATYYVEGV) threads the bilayer. Over 99 to 109 (HQQYVQRIEKQ) the chain is Cytoplasmic. Residues 110-130 (FLLYAYWIGLGILSSVGLGTG) traverse the membrane as a helical segment. The Extracellular portion of the chain corresponds to 131–250 (LHTFLLYLGP…ASRAKLAVQK (120 aa)). The tract at residues 173–316 (GTEGTISLWS…FVIITFSKHI (144 aa)) is VTT domain. The helical transmembrane segment at 251–271 (LVQKVGFFGILACASIPNPLF) threads the bilayer. At 272–273 (DL) the chain is on the cytoplasmic side. The chain crosses the membrane as a helical span at residues 274 to 294 (AGITCGHFLVPFWTFFGATLI). The Extracellular segment spans residues 295 to 305 (GKAIIKMHIQK). Residues 306 to 326 (IFVIITFSKHIVEQMVAFIGA) traverse the membrane as a helical segment. The Cytoplasmic portion of the chain corresponds to 327–363 (VPGIGPSLQKPFQEYLEAQRQKLHHKSEMGTPQGENW). Residues 364–384 (LSWMFEKLVVVMVCYFILSII) traverse the membrane as a helical segment. Over 385-406 (NSMAQSYAKRIQQRLNSEEKTK) the chain is Extracellular.

The protein belongs to the VMP1 family. Interacts with BECN1. Interacts with TJP1. Interacts with TP53INP2. Interacts with TMEM41B. Interacts with ATP2A2, PLN and SLN; competes with PLN and SLN to prevent them from forming an inhibitory complex with ATP2A2. Interacts with ATG2A.

The protein localises to the endoplasmic reticulum-Golgi intermediate compartment membrane. The protein resides in the cell membrane. It localises to the vacuole membrane. It is found in the endoplasmic reticulum membrane. The enzyme catalyses a 1,2-diacyl-sn-glycero-3-phospho-L-serine(in) = a 1,2-diacyl-sn-glycero-3-phospho-L-serine(out). It catalyses the reaction cholesterol(in) = cholesterol(out). It carries out the reaction a 1,2-diacyl-sn-glycero-3-phosphocholine(in) = a 1,2-diacyl-sn-glycero-3-phosphocholine(out). The catalysed reaction is a 1,2-diacyl-sn-glycero-3-phosphoethanolamine(in) = a 1,2-diacyl-sn-glycero-3-phosphoethanolamine(out). Its function is as follows. Phospholipid scramblase involved in lipid homeostasis and membrane dynamics processes. Has phospholipid scramblase activity toward cholesterol and phosphatidylserine, as well as phosphatidylethanolamine and phosphatidylcholine. Required for autophagosome formation: participates in early stages of autophagosome biogenesis at the endoplasmic reticulum (ER) membrane by reequilibrating the leaflets of the ER as lipids are extracted by ATG2 (ATG2A or ATG2B) to mediate autophagosome assembly. Regulates ATP2A2 activity to control ER-isolation membrane contacts for autophagosome formation. In addition to autophagy, involved in other processes in which phospholipid scramblase activity is required. Modulates ER contacts with lipid droplets, mitochondria and endosomes. Plays an essential role in formation of cell junctions. Upon stress such as bacterial and viral infection, promotes formation of cytoplasmic vacuoles followed by cell death. Involved in the cytoplasmic vacuolization of acinar cells during the early stage of acute pancreatitis. (Microbial infection) Host factor required for infection by all flaviviruses tested such as Zika virus and Yellow fever virus. Probably required post-entry of the virus to facilitate the ER membrane remodeling necessary to form replication organelles. The chain is Vacuole membrane protein 1 from Homo sapiens (Human).